We begin with the raw amino-acid sequence, 128 residues long: Large ribosomal subunit protein bL12 (128 aa).

Belongs to the bacterial ribosomal protein bL12 family. Homodimer. Part of the ribosomal stalk of the 50S ribosomal subunit. Forms a multimeric L10(L12)X complex, where L10 forms an elongated spine to which 2 to 4 L12 dimers bind in a sequential fashion. Binds GTP-bound translation factors.

Functionally, forms part of the ribosomal stalk which helps the ribosome interact with GTP-bound translation factors. Is thus essential for accurate translation. The sequence is that of Large ribosomal subunit protein bL12 from Streptomyces antibioticus.